Here is a 165-residue protein sequence, read N- to C-terminus: Cytochrome c-type biogenesis protein CcmE (165 aa).

The Cytoplasmic portion of the chain corresponds to 1–29 (MSATAEQNARNPKGKGGFARTVSQRKRKR). Residues 30-50 (LFLIGGALAVLAVAVGLMLTA) traverse the membrane as a helical; Signal-anchor for type II membrane protein segment. The Periplasmic segment spans residues 51–165 (FNQDIRFFRT…LKKKGVWEGK (115 aa)). Positions 143 and 147 each coordinate heme.

This sequence belongs to the CcmE/CycJ family.

The protein localises to the cell inner membrane. Functionally, heme chaperone required for the biogenesis of c-type cytochromes. Transiently binds heme delivered by CcmC and transfers the heme to apo-cytochromes in a process facilitated by CcmF and CcmH. The polypeptide is Cytochrome c-type biogenesis protein CcmE (Brucella canis (strain ATCC 23365 / NCTC 10854 / RM-666)).